The sequence spans 425 residues: Histidinol dehydrogenase (425 aa).

NAD(+)-binding residues include Tyr-124, Gln-184, and Asn-207. Residues Ser-230, Gln-252, and His-255 each coordinate substrate. The Zn(2+) site is built by Gln-252 and His-255. Residues Glu-321 and His-322 each act as proton acceptor in the active site. The substrate site is built by His-322, Asp-355, Glu-409, and His-414. Asp-355 contacts Zn(2+). His-414 contributes to the Zn(2+) binding site.

This sequence belongs to the histidinol dehydrogenase family. The cofactor is Zn(2+).

It carries out the reaction L-histidinol + 2 NAD(+) + H2O = L-histidine + 2 NADH + 3 H(+). Its pathway is amino-acid biosynthesis; L-histidine biosynthesis; L-histidine from 5-phospho-alpha-D-ribose 1-diphosphate: step 9/9. Its function is as follows. Catalyzes the sequential NAD-dependent oxidations of L-histidinol to L-histidinaldehyde and then to L-histidine. The sequence is that of Histidinol dehydrogenase from Halobacterium salinarum (strain ATCC 700922 / JCM 11081 / NRC-1) (Halobacterium halobium).